A 426-amino-acid polypeptide reads, in one-letter code: Phosphomethylpyrimidine synthase (426 aa).

Substrate-binding positions include M94, Y123, H162, 184-186 (SRG), 225-228 (NGMR), and E264. Position 268 (H268) interacts with Zn(2+). Y291 contributes to the substrate binding site. H332 contributes to the Zn(2+) binding site. 3 residues coordinate [4Fe-4S] cluster: C406, C409, and C413.

This sequence belongs to the ThiC family. It depends on [4Fe-4S] cluster as a cofactor.

The enzyme catalyses 5-amino-1-(5-phospho-beta-D-ribosyl)imidazole + S-adenosyl-L-methionine = 4-amino-2-methyl-5-(phosphooxymethyl)pyrimidine + CO + 5'-deoxyadenosine + formate + L-methionine + 3 H(+). It functions in the pathway cofactor biosynthesis; thiamine diphosphate biosynthesis. Functionally, catalyzes the synthesis of the hydroxymethylpyrimidine phosphate (HMP-P) moiety of thiamine from aminoimidazole ribotide (AIR) in a radical S-adenosyl-L-methionine (SAM)-dependent reaction. In Methanospirillum hungatei JF-1 (strain ATCC 27890 / DSM 864 / NBRC 100397 / JF-1), this protein is Phosphomethylpyrimidine synthase.